A 941-amino-acid chain; its full sequence is Cilia- and flagella-associated protein 69 (941 aa).

The protein localises to the cell projection. The protein resides in the cilium. It localises to the flagellum. Its function is as follows. Cilium- and flagellum-associated protein. In the olfactory epithelium, regulates the speed of activation and termination of the odor response and thus contributes to the robustness of olfactory transduction pathways. Required for sperm flagellum assembly and stability. This is Cilia- and flagella-associated protein 69 from Callithrix jacchus (White-tufted-ear marmoset).